The sequence spans 298 residues: Glyoxalase domain-containing protein 4 (298 aa).

A VOC 1 domain is found at arginine 5–arginine 130. Residue lysine 109 is modified to N6-succinyllysine. Position 131 is a phosphoserine (serine 131). Residues proline 137 to aspartate 258 enclose the VOC 2 domain. N6-succinyllysine is present on lysine 273.

This sequence belongs to the glyoxalase I family. As to quaternary structure, interacts with NUDT9.

The protein resides in the mitochondrion. This Mus musculus (Mouse) protein is Glyoxalase domain-containing protein 4 (Glod4).